We begin with the raw amino-acid sequence, 163 residues long: Large ribosomal subunit protein bL21 (163 aa).

The segment at 124-163 (KETTKKTKATVSIKKTAKKPSEKKSAPQKKAAVVSNNKED) is disordered.

This sequence belongs to the bacterial ribosomal protein bL21 family. As to quaternary structure, part of the 50S ribosomal subunit. Contacts protein L20.

In terms of biological role, this protein binds to 23S rRNA in the presence of protein L20. The sequence is that of Large ribosomal subunit protein bL21 from Bartonella quintana (strain Toulouse) (Rochalimaea quintana).